A 367-amino-acid polypeptide reads, in one-letter code: MKTRFPSPFFIFYRRLTVAISLGKILGWGCFGKLLSWIFAATVSFRRKVLSSAPHRVSSTVISVGNIVLGGSGKTPTVLWLAEVLKARGYSCAILSRGYKGKCSGQRKLTIVDPEIHDAAYVGDEPLLMAGKLSKGAVFVHKDRRLAAKEVAKNFDILLLDDGFQNNKLHKDVEIVVVNGQDPLGGGAFFPRGRLRDSPKRLQEADFIIVNGSCGLENQKLLHTWCTSPKIFVEPRISQVLWDSRGEKLPLDSLSGLAAGVFCGLGFPQGFLDMLKRAGVKIVGTYLLPDHAGITKKELHYFSSMTAMRQGEGILCTEKDGIKLGNLIHEPGILPIGKVQMEFDFTHQEDATAALLDKIDRIHNGKR.

68-75 (VLGGSGKT) lines the ATP pocket.

Belongs to the LpxK family.

The catalysed reaction is a lipid A disaccharide + ATP = a lipid IVA + ADP + H(+). It functions in the pathway glycolipid biosynthesis; lipid IV(A) biosynthesis; lipid IV(A) from (3R)-3-hydroxytetradecanoyl-[acyl-carrier-protein] and UDP-N-acetyl-alpha-D-glucosamine: step 6/6. Transfers the gamma-phosphate of ATP to the 4'-position of a tetraacyldisaccharide 1-phosphate intermediate (termed DS-1-P) to form tetraacyldisaccharide 1,4'-bis-phosphate (lipid IVA). This is Tetraacyldisaccharide 4'-kinase from Chlamydia abortus (strain DSM 27085 / S26/3) (Chlamydophila abortus).